Consider the following 366-residue polypeptide: tRNA/tmRNA (uracil-C(5))-methyltransferase (366 aa).

5 residues coordinate S-adenosyl-L-methionine: Gln-190, Tyr-218, Asn-223, Glu-239, and Asp-299. The active-site Nucleophile is Cys-324. Glu-358 acts as the Proton acceptor in catalysis.

The protein belongs to the class I-like SAM-binding methyltransferase superfamily. RNA M5U methyltransferase family. TrmA subfamily.

The enzyme catalyses uridine(54) in tRNA + S-adenosyl-L-methionine = 5-methyluridine(54) in tRNA + S-adenosyl-L-homocysteine + H(+). The catalysed reaction is uridine(341) in tmRNA + S-adenosyl-L-methionine = 5-methyluridine(341) in tmRNA + S-adenosyl-L-homocysteine + H(+). In terms of biological role, dual-specificity methyltransferase that catalyzes the formation of 5-methyluridine at position 54 (m5U54) in all tRNAs, and that of position 341 (m5U341) in tmRNA (transfer-mRNA). The protein is tRNA/tmRNA (uracil-C(5))-methyltransferase of Escherichia coli O6:H1 (strain CFT073 / ATCC 700928 / UPEC).